The primary structure comprises 429 residues: Uracil permease (429 aa).

At 1–13 the chain is on the cytoplasmic side; that stretch reads MTRRAIGVSERPP. A helical transmembrane segment spans residues 14–37; the sequence is LLQTIPLSLQHLFAMFGATVLVPV. The Periplasmic segment spans residues 38-41; sequence LFHI. The helical transmembrane segment at 42–61 threads the bilayer; it reads NPATVLLFNGIGTLLYLFIC. The Cytoplasmic segment spans residues 62-64; the sequence is KGK. Residues 65-81 form a discontinuously helical membrane-spanning segment; it reads IPAYLGSSFAFISPVLL. Phe-73 contacts uracil. Residues 82–89 are Periplasmic-facing; sequence LLPLGYEV. The helical transmembrane segment at 90 to 110 threads the bilayer; sequence ALGGFIMCGVLFCLVSFIVKK. The Cytoplasmic segment spans residues 111-122; the sequence is AGTGWLDVLFPP. The chain crosses the membrane as a helical span at residues 123–144; sequence AAMGAIVAVIGLELAGVAAGMA. The Periplasmic segment spans residues 145–155; it reads GLLPAEGQTPD. Residues 156 to 171 traverse the membrane as a helical segment; the sequence is SKTIIISITTLAVTVL. Residues 172–178 are Cytoplasmic-facing; sequence GSVLFRG. The helical transmembrane segment at 179 to 199 threads the bilayer; that stretch reads FLAIIPILIGVLVGYALSFAM. Topologically, residues 200–224 are periplasmic; that stretch reads GIVDTTPIINAHWFALPTLYTPRFE. A helical membrane pass occupies residues 225–248; the sequence is WFAILTILPAALVVIAEHVGHLVV. A uracil-binding site is contributed by Glu-241. At 249 to 261 the chain is on the cytoplasmic side; that stretch reads TANIVKKDLLRDP. A helical transmembrane segment spans residues 262–281; it reads GLHRSMFANGLSTVISGFFG. Residues 282 to 298 form a discontinuously helical membrane-spanning segment; it reads STPNTTYGENIGVMAIT. Uracil contacts are provided by Gly-289 and Glu-290. Topologically, residues 299–301 are cytoplasmic; it reads RVY. Residues 302–319 traverse the membrane as a helical segment; it reads STWVIGGAAIFAILLSCV. The Periplasmic segment spans residues 320–332; sequence GKLAAAIQMIPLP. Residues 333-354 traverse the membrane as a helical segment; sequence VMGGVSLLLYGVIGASGIRVLI. Residues 355-365 are Cytoplasmic-facing; sequence ESKVDYNKAQN. The discontinuously helical intramembrane region spans 366-401; that stretch reads LILTSVILIIGVSGAKVNIGAAELKGMALATIVGIG. The Cytoplasmic segment spans residues 402–429; the sequence is LSLIFKLISVLRPEEVVLDAEDADITDK.

The protein belongs to the nucleobase:cation symporter-2 (NCS2) (TC 2.A.40) family.

The protein resides in the cell inner membrane. It carries out the reaction uracil(in) + H(+)(in) = uracil(out) + H(+)(out). Its function is as follows. Transport of uracil in the cell. The protein is Uracil permease (uraA) of Escherichia coli O157:H7.